The following is a 478-amino-acid chain: NADH-ubiquinone oxidoreductase 49 kDa subunit, mitochondrial (478 aa).

Residues 1-42 (MATTLFRLAGRNAKRHCMRQSTTIAHNLNSTRAFSASALRRY) constitute a mitochondrion transit peptide. 3 residues coordinate [4Fe-4S] cluster: cysteine 341, cysteine 347, and cysteine 362.

This sequence belongs to the complex I 49 kDa subunit family. As to quaternary structure, complex I is composed of about 40 different subunits. Requires [4Fe-4S] cluster as cofactor.

It localises to the mitochondrion inner membrane. The enzyme catalyses a ubiquinone + NADH + 5 H(+)(in) = a ubiquinol + NAD(+) + 4 H(+)(out). In terms of biological role, core subunit of the mitochondrial membrane respiratory chain NADH dehydrogenase (Complex I) that is believed to belong to the minimal assembly required for catalysis. Complex I functions in the transfer of electrons from NADH to the respiratory chain. The immediate electron acceptor for the enzyme is believed to be ubiquinone. The sequence is that of NADH-ubiquinone oxidoreductase 49 kDa subunit, mitochondrial (nuo-49) from Neurospora crassa (strain ATCC 24698 / 74-OR23-1A / CBS 708.71 / DSM 1257 / FGSC 987).